A 1161-amino-acid polypeptide reads, in one-letter code: DNA-directed RNA polymerase subunit beta (1161 aa).

This sequence belongs to the RNA polymerase beta chain family. The RNAP catalytic core consists of 2 alpha, 1 beta, 1 beta' and 1 omega subunit. When a sigma factor is associated with the core the holoenzyme is formed, which can initiate transcription.

It catalyses the reaction RNA(n) + a ribonucleoside 5'-triphosphate = RNA(n+1) + diphosphate. In terms of biological role, DNA-dependent RNA polymerase catalyzes the transcription of DNA into RNA using the four ribonucleoside triphosphates as substrates. The chain is DNA-directed RNA polymerase subunit beta from Streptomyces avermitilis (strain ATCC 31267 / DSM 46492 / JCM 5070 / NBRC 14893 / NCIMB 12804 / NRRL 8165 / MA-4680).